The following is a 1027-amino-acid chain: MLPNLNRIPQVEQYVLDYLDDLQCQHFEGDIATNYADRLSLATDNSVYQQLPQAILFPKTVADIVRITKLANLPEYQSISFTPRGGGTGTNGQSINNNIIVDLSRHMTAILELNVKERWVRVQAGVVKDQLNQFLKPHGLFFAPELSTSNRATLGGMINTDASGQGSLQYGKTSNHVLALRAVLINGEILDTSAVNSVDVLENIDALELSESSKKLHQTIAQHCKEKRAAIIKDLPQLNRFLTGYDLKNVFNEDESEFNLTRILTGSEGSLAFICEAKLNLLLIPQYRTLINIKYRSFDAALRNAPFMVKANALSVETVDSKVLNLAKQDIIWHSVNELLTEDEKDPILGLNIVEFAGNNKEKIDRQVTALCRLLDEKIEHNQDHIIGYQVCSDLPSIERIYAMRKKAVGLLGNAKGAAKPIPFVEDTCVPPENLADYISEFRALLDQHNLQYGMFGHVDAGVLHVRPALDLCDKEQVKLFKQISDEVAELTIKYGGLLWGEHGKGVRSHYGEKFFTPELWHELRYIKTLFDPNNRLNPGKICTPLDSKDELYSILSPMRADKDRQIPIQIRDEFKGAMNCNGNGLCFNFDEHSIMCPSMKVSKNRVFSPKGRAAMVREWLRLMANENVSPEQLDFRKTEIKLTALVKRLSNTVQKWRGNYDFSHEVKAAMDTCLACKACASQCPIKIDVPSFRAKFFHFYHSRYLRPTKDHIVANLEIAAPYMAKQAKFFNYFTKLKVTQTLVEKTLGMTDLPLLSEPSLQQQLVEIHYQGKSLEELESLSAVEKNDILFIVQDPYTSYYDAKVIRDFVMLTQKLGFKPILLPFKPNGKAMHIKGFLKRFSKTAQNQAEFLNRMAKLGIPLVGVDPAIVLSYRDEYKEALQEKRGDFHVLTAHEWLKQRLQNADLQEKLKNIAKTDRTLGWYLFPHCTESTFMPNSPKEWQEIFGRFGQQLNVEKVGCCGMAGVFGHEVQNQKMSREIYDVSWHKKLHGKDPHFCLATGYSCRSQVKRYEHVVLKHPVQALLEVLK.

Residues 48–284 (YQQLPQAILF…CEAKLNLLLI (237 aa)) enclose the FAD-binding PCMH-type domain. Positions 405 and 503 each coordinate (R)-2-hydroxyglutarate. Residues 665–696 (HEVKAAMDTCLACKACASQCPIKIDVPSFRAK) form the 4Fe-4S ferredoxin-type domain. The [4Fe-4S] cluster site is built by Cys-674, Cys-677, Cys-680, and Cys-684.

The protein in the N-terminal section; belongs to the FAD-binding oxidoreductase/transferase type 4 family. As to quaternary structure, homotetramer. Requires [4Fe-4S] cluster as cofactor. FAD is required as a cofactor.

The enzyme catalyses (R)-2-hydroxyglutarate + A = 2-oxoglutarate + AH2. Catalyzes the oxidation of D-2-hydroxyglutarate (D-2-HGA) to 2-oxoglutarate. Provides the way to recycle D-2-HGA produced during L-serine synthesis by SerA, by converting it back to 2-oxoglutarate. The physiological molecule that functions as the primary electron acceptor during D-2-HGA oxidation is unknown. This Haemophilus influenzae (strain ATCC 51907 / DSM 11121 / KW20 / Rd) protein is D-2-hydroxyglutarate dehydrogenase.